A 1008-amino-acid chain; its full sequence is Serine/threonine-protein kinase PRP4 homolog (1008 aa).

A disordered region spans residues 1-103; the sequence is MAAAEAPSLR…PAKRTKLDDL (103 aa). An N-acetylalanine modification is found at alanine 2. 4 positions are modified to phosphoserine: serine 8, serine 20, serine 23, and serine 32. Composition is skewed to basic residues over residues 39-59 and 67-81; these read KHSR…KHKH and RKHK…HKRK. A compositionally biased stretch (basic and acidic residues) spans 82–91; it reads EVADASDKEG. 2 positions are modified to phosphoserine: serine 87 and serine 93. Lysine 99 carries the N6-acetyllysine; alternate modification. Residue lysine 99 forms a Glycyl lysine isopeptide (Lys-Gly) (interchain with G-Cter in SUMO2); alternate linkage. Lysine 111 participates in a covalent cross-link: Glycyl lysine isopeptide (Lys-Gly) (interchain with G-Cter in SUMO2). Residue lysine 117 forms a Glycyl lysine isopeptide (Lys-Gly) (interchain with G-Cter in SUMO2); alternate linkage. Residue lysine 117 forms a Glycyl lysine isopeptide (Lys-Gly) (interchain with G-Cter in SUMO1); alternate linkage. Position 131 is a phosphoserine (serine 131). At tyrosine 140 the chain carries Phosphotyrosine. Disordered stretches follow at residues 140-536 and 560-584; these read YESG…EDEE and SNLS…SPDD. 3 positions are modified to phosphoserine: serine 142, serine 144, and serine 166. Over residues 157-168 the composition is skewed to low complexity; the sequence is GNRSSTRSSSTK. Glycyl lysine isopeptide (Lys-Gly) (interchain with G-Cter in SUMO2) cross-links involve residues lysine 170 and lysine 177. Basic residues-rich tracts occupy residues 179-202 and 214-230; these read STKK…KKSK and RSKS…SKRS. Serine 239, serine 241, serine 257, serine 277, serine 283, serine 292, and serine 294 each carry phosphoserine. Positions 247 to 270 are enriched in basic and acidic residues; that stretch reads RSQEKVGKARSPVDDKAKVEDKSK. The segment covering 302 to 315 has biased composition (basic residues); that stretch reads SKDRRSRSKERKSK. Over residues 316 to 325 the composition is skewed to basic and acidic residues; sequence RPEADKEKKP. Phosphoserine occurs at positions 328, 354, 356, 366, and 368. The segment covering 342–367 has biased composition (basic residues); that stretch reads PSRRPGRSPKRRSLSPKQRDKSRRSR. Residue threonine 385 is modified to Phosphothreonine. Phosphoserine is present on serine 387. 2 stretches are compositionally biased toward basic and acidic residues: residues 395–408 and 415–429; these read RSLE…ERRR and RPRD…RSKD. Serine 427, serine 431, and serine 437 each carry phosphoserine. Basic residues predominate over residues 438 to 498; the sequence is PARRRASRSP…RGGRRRRSRS (61 aa). Phosphoserine is present on residues serine 519, serine 520, serine 521, serine 566, serine 570, serine 577, serine 579, and serine 581. Positions 519–536 are enriched in acidic residues; the sequence is SSSDDNLEDFDVEEEDEE. Positions 563–582 are enriched in low complexity; it reads SVPSEPSSPQSSTRSRSPSP. Glycyl lysine isopeptide (Lys-Gly) (interchain with G-Cter in SUMO2) cross-links involve residues lysine 594 and lysine 660. Positions 688-1004 constitute a Protein kinase domain; it reads YNVYGYTGQG…INQALQHAFI (317 aa). Residues 694–702 and lysine 718 contribute to the ATP site; that span reads TGQGVFSNV. Lysine 718 carries the N6-acetyllysine modification. Residue aspartate 816 is the Proton acceptor of the active site. Tyrosine 850 bears the Phosphotyrosine mark. A Phosphoserine modification is found at serine 853.

It belongs to the protein kinase superfamily. CMGC Ser/Thr protein kinase family. As to quaternary structure, interacts with CLK1 C-terminus. Associates with the U5 snRNP and NCOR1 deacetylase complexes. Identified in the spliceosome C complex. Post-translationally, phosphorylated by CLK1. Autophosphorylated; phosphorylation inhibits interaction with its targets, such as PRPF6 or SMARCA4.

It is found in the nucleus. It localises to the chromosome. Its subcellular location is the centromere. The protein localises to the kinetochore. The catalysed reaction is L-seryl-[protein] + ATP = O-phospho-L-seryl-[protein] + ADP + H(+). The enzyme catalyses L-threonyl-[protein] + ATP = O-phospho-L-threonyl-[protein] + ADP + H(+). Its function is as follows. Serine/threonine kinase involved in spliceosomal assembly as well as mitosis and signaling regulation. Connects chromatin mediated regulation of transcription and pre-mRNA splicing. During spliceosomal assembly, interacts with and phosphorylates PRPF6 and PRPF31, components of the U4/U6-U5 tri-small nuclear ribonucleoprotein (snRNP), to facilitate the formation of the spliceosome B complex. Plays a role in regulating transcription and the spindle assembly checkpoint (SAC). Associates with U5 snRNP and NCOR1 deacetylase complexes which may allow a coordination of pre-mRNA splicing with chromatin remodeling events involved in transcriptional regulation. Associates and probably phosphorylates SMARCA4 and NCOR1. Phosphorylates SRSF1. Associates with kinetochores during mitosis and is necessary for recruitment and maintenance of the checkpoint proteins such as MAD1L1 and MAD12L1 at the kinetochores. Phosphorylates and regulates the activity of the transcription factors such as ELK1 and KLF13. Phosphorylates nuclear YAP1 and WWTR1/TAZ which induces nuclear exclusion and regulates Hippo signaling pathway, involved in tissue growth control. This is Serine/threonine-protein kinase PRP4 homolog (PRP4K) from Bos taurus (Bovine).